Reading from the N-terminus, the 125-residue chain is Small ribosomal subunit protein uS12 (125 aa).

Aspartate 89 bears the 3-methylthioaspartic acid mark.

Belongs to the universal ribosomal protein uS12 family. Part of the 30S ribosomal subunit. Contacts proteins S8 and S17. May interact with IF1 in the 30S initiation complex.

In terms of biological role, with S4 and S5 plays an important role in translational accuracy. Interacts with and stabilizes bases of the 16S rRNA that are involved in tRNA selection in the A site and with the mRNA backbone. Located at the interface of the 30S and 50S subunits, it traverses the body of the 30S subunit contacting proteins on the other side and probably holding the rRNA structure together. The combined cluster of proteins S8, S12 and S17 appears to hold together the shoulder and platform of the 30S subunit. This Wigglesworthia glossinidia brevipalpis protein is Small ribosomal subunit protein uS12.